A 902-amino-acid chain; its full sequence is Probable leucine--tRNA ligase, mitochondrial (902 aa).

Lysine 67 carries the post-translational modification N6-acetyllysine. The short motif at 91-101 (YPSGKLHMGHV) is the 'HIGH' region element. Residue lysine 235 is modified to N6-acetyllysine. The 'KMSKS' region motif lies at 638 to 642 (KMSKS). Residue lysine 641 participates in ATP binding.

It belongs to the class-I aminoacyl-tRNA synthetase family.

It localises to the mitochondrion matrix. The enzyme catalyses tRNA(Leu) + L-leucine + ATP = L-leucyl-tRNA(Leu) + AMP + diphosphate. The protein is Probable leucine--tRNA ligase, mitochondrial (Lars2) of Mus musculus (Mouse).